The following is a 920-amino-acid chain: Dynamin-2B (920 aa).

The residue at position 1 (Met-1) is an N-acetylmethionine. The region spanning Pro-35–Pro-303 is the Dynamin-type G domain. The tract at residues Gly-45–Ser-52 is G1 motif. Gly-45–Ala-53 is a GTP binding site. The G2 motif stretch occupies residues Ala-71–Arg-73. Residues Asp-143 to Gly-146 form a G3 motif region. The interval Ser-204 to Asp-207 is G4 motif. Ser-204–Ala-210 contacts GTP. Positions Ala-238–Gly-241 are G5 motif. Ile-246–Ala-249 lines the GTP pocket. Residues Arg-507–Asp-522 show a composition bias toward basic and acidic residues. Disordered stretches follow at residues Arg-507–Pro-577 and Ile-632–Lys-657. Residues Ala-523 to Ser-545 show a composition bias toward polar residues. 2 stretches are compositionally biased toward basic and acidic residues: residues Ser-548–Pro-567 and Glu-641–Asn-652. In terms of domain architecture, PH spans Gly-579–Gln-703. In terms of domain architecture, GED spans Leu-737–Ala-830. The important for homodimerization stretch occupies residues Tyr-747–Lys-761. Positions Asn-788–Ser-812 form a coiled coil. Residues Arg-828–Tyr-920 form a disordered region. Positions Ser-833–Gly-849 are enriched in polar residues.

It belongs to the TRAFAC class dynamin-like GTPase superfamily. Dynamin/Fzo/YdjA family. As to quaternary structure, interacts with DRP1A at the plasma membrane and in forming clathrin-coated vesicles (CCV). In terms of tissue distribution, ubiquitous. Preferentially expressed in siliques.

It localises to the cytoplasm. The protein localises to the cytoskeleton. Its subcellular location is the cytoplasmic vesicle. The protein resides in the clathrin-coated vesicle. It is found in the cell membrane. The enzyme catalyses GTP + H2O = GDP + phosphate + H(+). In terms of biological role, putative microtubule-associated force-producing protein, able to bind and hydrolyze GTP. Collaboratively with DRP1A, participates in clathrin-coated vesicle formation during endocytosis. With DRP1A and PIP5K3, required for the precise coordination of polar ARAC3/ROP6 and ARAC4/ROP2 placement and subsequent root hair positioning during planar polarity formation in root hair-forming cells. This is Dynamin-2B from Arabidopsis thaliana (Mouse-ear cress).